We begin with the raw amino-acid sequence, 434 residues long: MSGNFFIFLLLLVTPGEAKKSFLSFLNIQNTEMLSFTRTEENIVVRSSYKDKQPHSSYLLVKLEDPKVLQVVNVTKTSLAVTDFTVNLKTFPGETNVTLQLWESEGRQTTLIDELKNVRVRVFRQTDDSLLQAPIHVDSSIFLLVLSMILLNKCAFGCKIEFQVLQTVWKRPLPILLGVVIQFFLMPFCGFLLSQILGLPKAQAFGFVMTCTCPGGGGGYLFALLLEGDVTLAILMTCTSTSLALIMMPVNSYFYSRLLGLAGAFHVPVLKIVSTLLFILMPMSTGVIIKHKMPAKAICLERVVRPLSLTLMFVGIYLAFRMGLVFLRMANLEVFLLGLLVPALGLLFGYSLAKVYLLPLPVCKTVALETGMLNSFLALAIIQLSFSQPKAHEASVAPFTVAMCSSCEMLLLLLVYKAKRRPSLSTEYEKTPLV.

The first 18 residues, 1–18, serve as a signal peptide directing secretion; the sequence is MSGNFFIFLLLLVTPGEA. Residues 19 to 129 lie on the Extracellular side of the membrane; sequence KKSFLSFLNI…VRVFRQTDDS (111 aa). N-linked (GlcNAc...) asparagine glycans are attached at residues Asn-73 and Asn-96. A helical transmembrane segment spans residues 130-150; sequence LLQAPIHVDSSIFLLVLSMIL. Topologically, residues 151 to 172 are cytoplasmic; the sequence is LNKCAFGCKIEFQVLQTVWKRP. The helical transmembrane segment at 173-193 threads the bilayer; that stretch reads LPILLGVVIQFFLMPFCGFLL. Residues 194 to 203 are Extracellular-facing; that stretch reads SQILGLPKAQ. The helical transmembrane segment at 204–226 threads the bilayer; it reads AFGFVMTCTCPGGGGGYLFALLL. Residues 227–232 are Cytoplasmic-facing; the sequence is EGDVTL. The chain crosses the membrane as a helical span at residues 233-255; it reads AILMTCTSTSLALIMMPVNSYFY. At 256–268 the chain is on the extracellular side; it reads SRLLGLAGAFHVP. Residues 269 to 289 traverse the membrane as a helical segment; that stretch reads VLKIVSTLLFILMPMSTGVII. At 290–306 the chain is on the cytoplasmic side; that stretch reads KHKMPAKAICLERVVRP. Residues 307-327 traverse the membrane as a helical segment; that stretch reads LSLTLMFVGIYLAFRMGLVFL. Residues 328 to 331 are Extracellular-facing; it reads RMAN. Residues 332–352 traverse the membrane as a helical segment; the sequence is LEVFLLGLLVPALGLLFGYSL. The Cytoplasmic portion of the chain corresponds to 353 to 365; the sequence is AKVYLLPLPVCKT. Residues 366–386 form a helical membrane-spanning segment; it reads VALETGMLNSFLALAIIQLSF. Residues 387 to 395 are Extracellular-facing; the sequence is SQPKAHEAS. A helical transmembrane segment spans residues 396–416; the sequence is VAPFTVAMCSSCEMLLLLLVY. Over 417-434 the chain is Cytoplasmic; it reads KAKRRPSLSTEYEKTPLV.

The protein belongs to the bile acid:sodium symporter (BASS) (TC 2.A.28) family.

It localises to the membrane. This chain is Sodium/bile acid cotransporter 5 (Slc10a5), found in Mus musculus (Mouse).